Reading from the N-terminus, the 939-residue chain is MANMRVHELAKELNITSKDITDMLSNSEKTYKPVSGLTDAEISSVRKKFAPAPKVENKPAAQPAKQSQPVKNDNRDNRQQNQAPKQPQQGTQNKSGNADDKKHISQVYFPQNSSRDKNSRRDNNNRDGQRDNNGGYRNNDRNNGGYRNNDRGNNGYRNNDRNNNGGYGNRDNNGGYRNNDRNNNGGYGNRDNNGGYRNNDRNNGGYRNNDRNNNGGYGNRDNNGGYRNNDRNNNGGYGNRDNNGGYRNNDRNNNGGFRNDRNGQSGNGGFRKDNDQNRGGFNGGQRRNNDRRDSAPKEEFDFSAKPDSRRHDSRIDSKKNDRKRDNEAKENLKFANSRFDKKPMTKPEKKEKEEETIKQLVLPDTLTIKELADKMKVAPAALVKKLFLQGKVVTINEEIDYDAAEEIALEFNCICEHEEKVDVIAELLKEDEEPEDKLVPRPPVVCVMGHVDHGKTSLLDAIRETHVTAKESGGITQKIGAYQVNVNGNLITFLDTPGHEAFTAMRMRGAQATDIAILVVAADDGVMPQTIEAINHAKAAGVEIIVAVNKIDKPNANIEKVKQELTEYGLIAEDWGGSTTFVPVSAHTKQGIDELLDMILLTAEVNELKANPDRKARGIVIEAELDKGRGPVASILVQKGTLHVGDAVSAGSCYGKIRAMIDDKGNRVKVAGPSTPVEILGLNDVPNAGEIIMAADSEKEARSIAETFISEGRKKLLDDTKHKVSLDALFEQIQAGNMKELNIIIKADVQGSVEAVKSSLVRLSNEEVVVKVIHGGVGNVNESDVVLASASNAIIIAFNVKPDNQARIVAEREKVDLRLYSVIYNAIEDVEAALKGMLEPIYEEKIIGHARIMQIFKASGVGNIAGCIVEEGRITRDSVVRITRGSEKVYEGPIASLKHFKDEVKEIKAGTECGMVFEKFNDIQPEDMIEAHIMVEVPR.

A disordered region spans residues 48 to 355; it reads KFAPAPKVEN…KPEKKEKEEE (308 aa). The span at 79 to 93 shows a compositional bias: low complexity; sequence QQNQAPKQPQQGTQN. Over residues 114–130 the composition is skewed to basic and acidic residues; sequence SRDKNSRRDNNNRDGQR. Residues 131 to 257 are compositionally biased toward low complexity; that stretch reads DNNGGYRNND…NNDRNNNGGF (127 aa). Basic and acidic residues predominate over residues 287 to 355; the sequence is RNNDRRDSAP…KPEKKEKEEE (69 aa). In terms of domain architecture, tr-type G spans 440–609; sequence PRPPVVCVMG…LLTAEVNELK (170 aa). The interval 449-456 is G1; sequence GHVDHGKT. 449-456 serves as a coordination point for GTP; that stretch reads GHVDHGKT. The tract at residues 474 to 478 is G2; it reads GITQK. A G3 region spans residues 495 to 498; that stretch reads DTPG. Residues 495-499 and 549-552 contribute to the GTP site; these read DTPGH and NKID. The interval 549–552 is G4; the sequence is NKID. The segment at 585 to 587 is G5; that stretch reads SAH.

It belongs to the TRAFAC class translation factor GTPase superfamily. Classic translation factor GTPase family. IF-2 subfamily.

Its subcellular location is the cytoplasm. One of the essential components for the initiation of protein synthesis. Protects formylmethionyl-tRNA from spontaneous hydrolysis and promotes its binding to the 30S ribosomal subunits. Also involved in the hydrolysis of GTP during the formation of the 70S ribosomal complex. This Lachnospira eligens (strain ATCC 27750 / DSM 3376 / VPI C15-48 / C15-B4) (Eubacterium eligens) protein is Translation initiation factor IF-2.